The chain runs to 86 residues: MQFFAVALFATSALAAVCPTGLFSNPLCCATNVLDLIGVDCKTPTIAVDTGAIFQAHCASKGSKPLCCVAPVADQALLCQKAIGTF.

Residues 1 to 15 form the signal peptide; that stretch reads MQFFAVALFATSALA. 4 disulfide bridges follow: Cys-18-Cys-67, Cys-28-Cys-58, Cys-29-Cys-41, and Cys-68-Cys-79.

It belongs to the cerato-ulmin hydrophobin family. Homodimer. Homodimers further self-assemble to form highly ordered films at water-air interfaces through intermolecular interactions.

Its subcellular location is the secreted. The protein resides in the spore wall. It is found in the cell wall. In terms of biological role, aerial growth, conidiation, and dispersal of filamentous fungi in the environment rely upon a capability of their secreting small amphipathic proteins called hydrophobins (HPBs) with low sequence identity. Class I can self-assemble into an outermost layer of rodlet bundles on aerial cell surfaces, conferring cellular hydrophobicity that supports fungal growth, development and dispersal; whereas Class II form highly ordered films at water-air interfaces through intermolecular interactions but contribute nothing to the rodlet structure. Hbf2 is a class II hydrophobin that is involved in sporuration. This is Class II hydrophobin 2 from Hypocrea jecorina (Trichoderma reesei).